Here is a 68-residue protein sequence, read N- to C-terminus: Pleurocidin (68 aa).

A signal peptide spans 1–22; that stretch reads MKFTATFLMIAIFVLMVEPGEC. A propeptide spanning residues 48-68 is cleaved from the precursor; it reads GDKQELNKRAVDEDPNVIVFE.

The protein belongs to the pleurocidin family. In terms of tissue distribution, goblet cells.

It localises to the secreted. Functionally, antimicrobial peptide with potent activity against Gram-positive and Gram-negative bacteria. Activity against E.coli and B.subtilis. Weaker activity against L.mucor, s.marcescens and P.aeruginosa. May play a role in innate host defense. In Pseudopleuronectes americanus (Winter flounder), this protein is Pleurocidin (ple2).